The sequence spans 772 residues: Phosphatidylinositol 4-phosphate 5-kinase 5 (772 aa).

The disordered stretch occupies residues 22-56; the sequence is AKKRANSVFGTVSVAPHTDNDTTTDDNDDETTTNR. Acidic residues predominate over residues 43-52; sequence TTTDDNDDET. MORN repeat units lie at residues 75–97, 98–120, 121–143, 144–166, 167–189, 190–212, 213–235, and 236–257; these read YTGQ…DGCM, YIGD…SGAT, YEGE…SGDA, YKGQ…NGDA, YDGE…DGSY, YIGE…NGNR, YDGF…NGSF, and YVGH…SGNE. In terms of domain architecture, PIPK spans 377-768; the sequence is SKGHRNYELM…RFRDFIFKVF (392 aa). A disordered region spans residues 646 to 665; that stretch reads SGARTPIGESEEESGPRLSR. The activation loop stretch occupies residues 728 to 749; that stretch reads YDISKKLEHAYKSIQYDPSSIS.

The catalysed reaction is a 1,2-diacyl-sn-glycero-3-phospho-(1D-myo-inositol 4-phosphate) + ATP = a 1,2-diacyl-sn-glycero-3-phospho-(1D-myo-inositol-4,5-bisphosphate) + ADP + H(+). This Arabidopsis thaliana (Mouse-ear cress) protein is Phosphatidylinositol 4-phosphate 5-kinase 5 (PIP5K5).